The chain runs to 465 residues: Argininosuccinate lyase (465 aa).

It belongs to the lyase 1 family. Argininosuccinate lyase subfamily.

The protein resides in the cytoplasm. The enzyme catalyses 2-(N(omega)-L-arginino)succinate = fumarate + L-arginine. It participates in amino-acid biosynthesis; L-arginine biosynthesis; L-arginine from L-ornithine and carbamoyl phosphate: step 3/3. In Halorhodospira halophila (strain DSM 244 / SL1) (Ectothiorhodospira halophila (strain DSM 244 / SL1)), this protein is Argininosuccinate lyase.